The chain runs to 260 residues: Snake venom serine protease homolog 1 (260 aa).

Residues 1-18 (MVLIRVLANLLLLQLSYA) form the signal peptide. The propeptide occupies 19 to 24 (QESSEL). Residues 25–251 (VIGGDECDIN…YTDWIEGIIA (227 aa)) form the Peptidase S1 domain. Disulfide bonds link Cys31–Cys165, Cys52–Cys68, Cys100–Cys258, Cys144–Cys212, Cys176–Cys191, and Cys202–Cys227. N-linked (GlcNAc...) asparagine glycosylation is present at Asn253.

The protein belongs to the peptidase S1 family. Snake venom subfamily. In terms of tissue distribution, expressed by the venom gland.

The protein resides in the secreted. In terms of biological role, snake venom serine protease homolog that may act in the hemostasis system of the prey. This chain is Snake venom serine protease homolog 1, found in Bitis gabonica (Gaboon adder).